A 57-amino-acid polypeptide reads, in one-letter code: U17-myrmicitoxin-Tb1a (57 aa).

The N-terminal stretch at 1-29 (MEKNRTNIFSVYLMITFLLISIFITMVMS) is a signal peptide. A propeptide spanning residues 30-33 (DGEA) is cleaved from the precursor. Residues Cys-42 and Cys-53 are joined by a disulfide bond. Ala-56 is subject to Alanine amide.

Post-translationally, O-glycosylated. Expressed by the venom gland.

The protein localises to the secreted. Functionally, serine protease inhibitor which exhibits antifibrinolytic, antielastolytic and antimicrobial activities. Displays antimicrobial activity against bacteria and fungi. Likely functions in the innate immune response to microbial infection and possibly in the venom, as an antifibrinolytic agent. This is U17-myrmicitoxin-Tb1a from Tetramorium bicarinatum (Tramp ant).